Consider the following 609-residue polypeptide: Glutamine--fructose-6-phosphate aminotransferase [isomerizing] (609 aa).

Cys2 acts as the Nucleophile; for GATase activity in catalysis. Residues 2 to 218 (CGIVGAVAQR…EGDVAEVTRR (217 aa)) enclose the Glutamine amidotransferase type-2 domain. SIS domains follow at residues 286-426 (AAEF…HNGM) and 458-599 (LAED…VDQP). Lys604 serves as the catalytic For Fru-6P isomerization activity.

As to quaternary structure, homodimer.

Its subcellular location is the cytoplasm. It carries out the reaction D-fructose 6-phosphate + L-glutamine = D-glucosamine 6-phosphate + L-glutamate. In terms of biological role, catalyzes the first step in hexosamine metabolism, converting fructose-6P into glucosamine-6P using glutamine as a nitrogen source. The sequence is that of Glutamine--fructose-6-phosphate aminotransferase [isomerizing] from Shewanella oneidensis (strain ATCC 700550 / JCM 31522 / CIP 106686 / LMG 19005 / NCIMB 14063 / MR-1).